The sequence spans 312 residues: Olfactory receptor 1D2 (312 aa).

At M1 to R25 the chain is on the extracellular side. N-linked (GlcNAc...) asparagine glycosylation occurs at N5. The helical transmembrane segment at I26–I49 threads the bilayer. At S50–T57 the chain is on the cytoplasmic side. The helical transmembrane segment at P58–P79 threads the bilayer. At K80 to Q100 the chain is on the extracellular side. Cysteines 97 and 189 form a disulfide. Residues L101–Y120 traverse the membrane as a helical segment. Topologically, residues D121–K139 are cytoplasmic. A helical membrane pass occupies residues L140–I158. Over H159 to H196 the chain is Extracellular. N195 is a glycosylation site (N-linked (GlcNAc...) asparagine). A helical membrane pass occupies residues T197 to V219. At L220 to K236 the chain is on the cytoplasmic side. The helical transmembrane segment at A237–Y259 threads the bilayer. The Extracellular portion of the chain corresponds to L260 to S271. Residues V272 to L291 traverse the membrane as a helical segment. Topologically, residues R292–T312 are cytoplasmic.

The protein belongs to the G-protein coupled receptor 1 family.

Its subcellular location is the cell membrane. Functionally, odorant receptor. The polypeptide is Olfactory receptor 1D2 (OR1D2) (Pan troglodytes (Chimpanzee)).